Reading from the N-terminus, the 194-residue chain is dITP/XTP pyrophosphatase (194 aa).

Residue 8 to 13 (TSNPGK) coordinates substrate. The Mg(2+) site is built by glutamate 38 and aspartate 67. Catalysis depends on aspartate 67, which acts as the Proton acceptor. Residues serine 68, 152 to 155 (FGYD), lysine 175, and 180 to 181 (HR) contribute to the substrate site.

Belongs to the HAM1 NTPase family. As to quaternary structure, homodimer. Mg(2+) is required as a cofactor.

The catalysed reaction is XTP + H2O = XMP + diphosphate + H(+). The enzyme catalyses dITP + H2O = dIMP + diphosphate + H(+). It carries out the reaction ITP + H2O = IMP + diphosphate + H(+). In terms of biological role, pyrophosphatase that catalyzes the hydrolysis of nucleoside triphosphates to their monophosphate derivatives, with a high preference for the non-canonical purine nucleotides XTP (xanthosine triphosphate), dITP (deoxyinosine triphosphate) and ITP. Seems to function as a house-cleaning enzyme that removes non-canonical purine nucleotides from the nucleotide pool, thus preventing their incorporation into DNA/RNA and avoiding chromosomal lesions. The chain is dITP/XTP pyrophosphatase from Legionella pneumophila (strain Paris).